The following is a 184-amino-acid chain: GTP cyclohydrolase 1 (184 aa).

Cysteine 75, histidine 78, and cysteine 146 together coordinate Zn(2+).

It belongs to the GTP cyclohydrolase I family. In terms of assembly, homomer.

It catalyses the reaction GTP + H2O = 7,8-dihydroneopterin 3'-triphosphate + formate + H(+). Its pathway is cofactor biosynthesis; 7,8-dihydroneopterin triphosphate biosynthesis; 7,8-dihydroneopterin triphosphate from GTP: step 1/1. The chain is GTP cyclohydrolase 1 from Teredinibacter turnerae (strain ATCC 39867 / T7901).